Consider the following 191-residue polypeptide: Potassium-transporting ATPase KdpC subunit (191 aa).

A helical transmembrane segment spans residues 13 to 35; the sequence is VLFTGLCGLAYPLAITGVAQAVL. A disordered region spans residues 112–132; it reads SGPVPADAVTSSASGLDPDIS.

This sequence belongs to the KdpC family. In terms of assembly, the system is composed of three essential subunits: KdpA, KdpB and KdpC.

Its subcellular location is the cell inner membrane. Its function is as follows. Part of the high-affinity ATP-driven potassium transport (or Kdp) system, which catalyzes the hydrolysis of ATP coupled with the electrogenic transport of potassium into the cytoplasm. This subunit acts as a catalytic chaperone that increases the ATP-binding affinity of the ATP-hydrolyzing subunit KdpB by the formation of a transient KdpB/KdpC/ATP ternary complex. In Allorhizobium ampelinum (strain ATCC BAA-846 / DSM 112012 / S4) (Agrobacterium vitis (strain S4)), this protein is Potassium-transporting ATPase KdpC subunit.